The following is a 208-amino-acid chain: Sodium/potassium-transporting ATPase subunit beta-1-interacting protein 4 (208 aa).

4 helical membrane passes run 10–30, 35–55, 62–82, and 151–171; these read LILL…FDFL, APIL…FGTL, VIAY…LICF, and ALQI…TSVF.

This sequence belongs to the NKAIN family. As to quaternary structure, interacts with atp1b1 C-terminus.

The protein localises to the cell membrane. In Xenopus tropicalis (Western clawed frog), this protein is Sodium/potassium-transporting ATPase subunit beta-1-interacting protein 4 (nkain4).